The sequence spans 201 residues: Large ribosomal subunit protein uL4 (201 aa).

The disordered stretch occupies residues 44–71 (RAQKTRAEVSGSGKKPWRQKGTGRARSG).

Belongs to the universal ribosomal protein uL4 family. As to quaternary structure, part of the 50S ribosomal subunit.

Its function is as follows. One of the primary rRNA binding proteins, this protein initially binds near the 5'-end of the 23S rRNA. It is important during the early stages of 50S assembly. It makes multiple contacts with different domains of the 23S rRNA in the assembled 50S subunit and ribosome. Functionally, forms part of the polypeptide exit tunnel. The protein is Large ribosomal subunit protein uL4 of Proteus mirabilis (strain HI4320).